The following is a 160-amino-acid chain: MNRMSTIFLKIALVLIGIPILALCIFLVPKVANYSAELFPNIAYIKYLVFIYLYVTAIPFYFALYQAFKLLSYIDKNKAFSGLSVRALKNIKYCAVTISIFYAAGMPVFYLMAEIDDAPGIIVIGLVIIFASMVIAVFAAVLQKLLKEAIDIKSENDLTV.

4 consecutive transmembrane segments (helical) span residues 7–27 (IFLK…CIFL), 48–68 (LVFI…YQAF), 95–115 (AVTI…MAEI), and 121–141 (IIVI…FAAV).

It localises to the cell membrane. This is an uncharacterized protein from Bacillus subtilis (strain 168).